A 471-amino-acid polypeptide reads, in one-letter code: Probable ribonuclease FAU-1 (471 aa).

This sequence belongs to the FAU-1 family.

Functionally, probable RNase involved in rRNA stability through maturation and/or degradation of precursor rRNAs. Preferentially cleaves UA sequences in the 5' precursor region of 5S rRNA. Binds to RNA in loop regions with AU-rich sequences. This is Probable ribonuclease FAU-1 from Thermococcus kodakarensis (strain ATCC BAA-918 / JCM 12380 / KOD1) (Pyrococcus kodakaraensis (strain KOD1)).